Here is a 135-residue protein sequence, read N- to C-terminus: MLSPQRTRFRKQHRGRMKGISSRGNRICFGRYALQALEPAWITSRQIEAGRRAMSRNVRRGGQIWVRIFPDKPVTVRPTETRMGSGKGFPEYWVAVVKPGKILYEMGGVPENIARKAISIASSKMPIRTQFIISG.

It belongs to the universal ribosomal protein uL16 family. In terms of assembly, part of the 50S ribosomal subunit.

The protein resides in the plastid. It localises to the chloroplast. The protein is Large ribosomal subunit protein uL16c of Phaseolus vulgaris (Kidney bean).